Here is a 183-residue protein sequence, read N- to C-terminus: Lipid droplet coating protein mpl1 (183 aa).

It belongs to the perilipin family.

It localises to the lipid droplet. Its function is as follows. Lipid droplet coating protein that regulates lipid metabolism, appressorial turgor pressure, and virulence. Appressorial turgor pressure is important for breaching the insect cuticle during infection. The sequence is that of Lipid droplet coating protein mpl1 from Metarhizium robertsii (strain ARSEF 23 / ATCC MYA-3075) (Metarhizium anisopliae (strain ARSEF 23)).